The following is a 248-amino-acid chain: Clathrin light chain A (248 aa).

The disordered stretch occupies residues Met1–Ser93. A compositionally biased stretch (gly residues) spans Ala13 to Gly25. The segment at Val100–Arg162 is involved in binding clathrin heavy chain. 2 positions are modified to phosphoserine: Ser105 and Ser206. Position 223 is an N6-acetyllysine (Lys223). At Ser236 the chain carries Phosphoserine. The residue at position 242 (Lys242) is an N6-acetyllysine.

The protein belongs to the clathrin light chain family. As to quaternary structure, clathrin coats are formed from molecules containing 3 heavy chains and 3 light chains. Interacts with CALY; the interaction stimulates clathrin self-assembly and clathrin-mediated endocytosis. Interacts with CKAP5 and TACC3 forming the TACC3/ch-TOG/clathrin complex located at spindle inter-microtubules bridges; the complex implicates clathrin triskelions.

It localises to the cytoplasmic vesicle membrane. The protein localises to the membrane. It is found in the coated pit. The protein resides in the cytoplasm. Its subcellular location is the cytoskeleton. It localises to the spindle. Its function is as follows. Clathrin is the major protein of the polyhedral coat of coated pits and vesicles. Acts as a component of the TACC3/ch-TOG/clathrin complex proposed to contribute to stabilization of kinetochore fibers of the mitotic spindle by acting as inter-microtubule bridge. This is Clathrin light chain A (Clta) from Rattus norvegicus (Rat).